A 301-amino-acid polypeptide reads, in one-letter code: Sulfate adenylyltransferase subunit 2 (301 aa).

This sequence belongs to the PAPS reductase family. CysD subfamily. In terms of assembly, heterodimer composed of CysD, the smaller subunit, and CysN.

The catalysed reaction is sulfate + ATP + H(+) = adenosine 5'-phosphosulfate + diphosphate. The protein operates within sulfur metabolism; hydrogen sulfide biosynthesis; sulfite from sulfate: step 1/3. Functionally, with CysN forms the ATP sulfurylase (ATPS) that catalyzes the adenylation of sulfate producing adenosine 5'-phosphosulfate (APS) and diphosphate, the first enzymatic step in sulfur assimilation pathway. APS synthesis involves the formation of a high-energy phosphoric-sulfuric acid anhydride bond driven by GTP hydrolysis by CysN coupled to ATP hydrolysis by CysD. In Shewanella woodyi (strain ATCC 51908 / MS32), this protein is Sulfate adenylyltransferase subunit 2.